The sequence spans 517 residues: Ribonuclease Y (517 aa).

Residues 1–21 (MIESLIALIAAIVGLGIGYLV) form a helical membrane-spanning segment. A KH domain is found at 207–273 (LINVINIKND…TKVIELLVED (67 aa)). One can recognise an HD domain in the interval 333–426 (ALAHSLEVAH…VCAADTLSAA (94 aa)).

This sequence belongs to the RNase Y family.

The protein localises to the cell membrane. Endoribonuclease that initiates mRNA decay. The protein is Ribonuclease Y of Campylobacter jejuni subsp. jejuni serotype O:2 (strain ATCC 700819 / NCTC 11168).